The chain runs to 847 residues: Phenylalanine--tRNA ligase beta subunit (847 aa).

In terms of domain architecture, tRNA-binding spans 40–168; the sequence is FGIEGPVVVG…LDPEVGADAV (129 aa). Residues 426-501 enclose the B5 domain; it reads ADAEPIRLPD…RIVGFDRIPS (76 aa). 4 residues coordinate Mg(2+): D479, D485, E488, and E489. The FDX-ACB domain maps to 753–846; sequence AGFPAATQDL…AGQLFGAAIR (94 aa).

This sequence belongs to the phenylalanyl-tRNA synthetase beta subunit family. Type 1 subfamily. As to quaternary structure, tetramer of two alpha and two beta subunits. Mg(2+) serves as cofactor.

Its subcellular location is the cytoplasm. The enzyme catalyses tRNA(Phe) + L-phenylalanine + ATP = L-phenylalanyl-tRNA(Phe) + AMP + diphosphate + H(+). This is Phenylalanine--tRNA ligase beta subunit from Leifsonia xyli subsp. xyli (strain CTCB07).